Reading from the N-terminus, the 784-residue chain is Lon protease (784 aa).

Positions 6–207 constitute a Lon N-terminal domain; it reads LPLMALRDMV…TVITTLTSNI (202 aa). 356–363 lines the ATP pocket; the sequence is GPPGVGKT. A Lon proteolytic domain is found at 592–773; it reads EDQIGSTTGL…DQVLKHALVE (182 aa). Residues Ser-679 and Lys-722 contribute to the active site.

It belongs to the peptidase S16 family. As to quaternary structure, homohexamer. Organized in a ring with a central cavity.

It is found in the cytoplasm. It catalyses the reaction Hydrolysis of proteins in presence of ATP.. Functionally, ATP-dependent serine protease that mediates the selective degradation of mutant and abnormal proteins as well as certain short-lived regulatory proteins. Required for cellular homeostasis and for survival from DNA damage and developmental changes induced by stress. Degrades polypeptides processively to yield small peptide fragments that are 5 to 10 amino acids long. Binds to DNA in a double-stranded, site-specific manner. This is Lon protease from Rickettsia typhi (strain ATCC VR-144 / Wilmington).